The sequence spans 204 residues: Holliday junction branch migration complex subunit RuvA (204 aa).

The segment at 1–64 (MIGRLQGILL…EDAHLLFGFA (64 aa)) is domain I. A domain II region spans residues 65–143 (QKTDRTLFRE…GVKQSDFFVE (79 aa)). Residues 144 to 155 (STHIPLSPSIES) are flexible linker. The segment at 156-204 (HSESSSDEAISALIALGYKPVEAEKMVKRVAKPELTSEQVIREALKAAL) is domain III.

It belongs to the RuvA family. Homotetramer. Forms an RuvA(8)-RuvB(12)-Holliday junction (HJ) complex. HJ DNA is sandwiched between 2 RuvA tetramers; dsDNA enters through RuvA and exits via RuvB. An RuvB hexamer assembles on each DNA strand where it exits the tetramer. Each RuvB hexamer is contacted by two RuvA subunits (via domain III) on 2 adjacent RuvB subunits; this complex drives branch migration. In the full resolvosome a probable DNA-RuvA(4)-RuvB(12)-RuvC(2) complex forms which resolves the HJ.

The protein resides in the cytoplasm. Functionally, the RuvA-RuvB-RuvC complex processes Holliday junction (HJ) DNA during genetic recombination and DNA repair, while the RuvA-RuvB complex plays an important role in the rescue of blocked DNA replication forks via replication fork reversal (RFR). RuvA specifically binds to HJ cruciform DNA, conferring on it an open structure. The RuvB hexamer acts as an ATP-dependent pump, pulling dsDNA into and through the RuvAB complex. HJ branch migration allows RuvC to scan DNA until it finds its consensus sequence, where it cleaves and resolves the cruciform DNA. The sequence is that of Holliday junction branch migration complex subunit RuvA from Haemophilus influenzae (strain PittEE).